A 414-amino-acid polypeptide reads, in one-letter code: Isocitrate dehydrogenase [NADP] cytoplasmic (414 aa).

N-acetylserine is present on Ser2. The residue at position 42 (Tyr42) is a Phosphotyrosine. 75-77 (TIT) is a binding site for NADP(+). Thr77 lines the substrate pocket. N6-acetyllysine is present on Lys81. An NADP(+)-binding site is contributed by Arg82. Substrate is bound by residues 94-100 (SPNGTIR) and Arg109. Lys126 carries the post-translational modification N6-succinyllysine. Residues Arg132 and Lys212 each coordinate substrate. N6-acetyllysine is present on residues Lys224, Lys233, and Lys243. Asp252 serves as a coordination point for Mn(2+). Lys260 contributes to the NADP(+) binding site. Mn(2+) contacts are provided by Asp275 and Asp279. An NADP(+)-binding site is contributed by 310-315 (GTVTRH). Residue Lys321 is modified to N6-acetyllysine. Asn328 contributes to the NADP(+) binding site. Ser389 is modified (phosphoserine). Lys400 carries the post-translational modification N6-succinyllysine.

It belongs to the isocitrate and isopropylmalate dehydrogenases family. In terms of assembly, homodimer. Mg(2+) serves as cofactor. It depends on Mn(2+) as a cofactor. Acetylation at Lys-374 dramatically reduces catalytic activity.

The protein localises to the cytoplasm. The protein resides in the cytosol. It localises to the peroxisome. The enzyme catalyses D-threo-isocitrate + NADP(+) = 2-oxoglutarate + CO2 + NADPH. Catalyzes the NADP(+)-dependent oxidative decarboxylation of isocitrate (D-threo-isocitrate) to 2-ketoglutarate (2-oxoglutarate), which is required by other enzymes such as the phytanoyl-CoA dioxygenase. Plays a critical role in the generation of NADPH, an important cofactor in many biosynthesis pathways. May act as a corneal epithelial crystallin and may be involved in maintaining corneal epithelial transparency. The protein is Isocitrate dehydrogenase [NADP] cytoplasmic (IDH1) of Homo sapiens (Human).